A 247-amino-acid chain; its full sequence is MNKQRVTLNCDMGESFGNWKMGSDELVMPWVDMANIACGFHASDPSVMSKTVALAKHYKVKIGAHPGYQDLVGFGRRSIPHTPAQISEIVLYQVGALKAVCQYHDVPLHYVKPHGALYNDMMESEAIFRAICEAVSIFGIPLMILATSDNQRYLDIADIYDVPLLFEAFADRQYQEDGKLTPRSQANAVYHQPEDIYNQALQIATYGSVNTANGTRLSLEADTICVHGDNPESITLVQRISQAIAKM.

The protein belongs to the LamB/PxpA family. In terms of assembly, forms a complex composed of PxpA, PxpB and PxpC.

It carries out the reaction 5-oxo-L-proline + ATP + 2 H2O = L-glutamate + ADP + phosphate + H(+). Functionally, catalyzes the cleavage of 5-oxoproline to form L-glutamate coupled to the hydrolysis of ATP to ADP and inorganic phosphate. The polypeptide is 5-oxoprolinase subunit A (Vibrio vulnificus (strain YJ016)).